The primary structure comprises 133 residues: Core atranone cluster (CAC) protein 11 (133 aa).

The protein operates within mycotoxin biosynthesis. Its function is as follows. Part of the core atranone cluster (CAC) which products are predicted to catalyze most or all steps of mycotoxin atranone synthesis, starting from geranylgeranyl pyrophosphate (GGPP). The initial cyclization of GGPP to dolabellane is probably performed by the terpene cyclase ATR13. The Baeyer-Villiger oxidation near the end of the atranone synthesis, which converts atranones D and E to atranones F and G is predicted to be catalyzed by the monooxygenase ATR8. Of the CAC's other predicted gene products, the reducing PKS ATR6 might synthesize a polyketide chain. This polyketide is probably transferred onto the atranone backbone by the polyketide transferase ATR5. Other predicted CAC products include 4 oxygenases (ATR2, ATR3, ATR4, and ATR14), 3 short-chain reductases (ATR7, ATR9, and ATR10), and a methyltransferase (ATR12). These may all be involved in the various steps of atranone biosynthesis, although their specific roles must await experimental determination. The protein is Core atranone cluster (CAC) protein 11 of Stachybotrys chlorohalonatus (strain IBT 40285).